The following is a 134-amino-acid chain: Profilin-4 (134 aa).

A disulfide bond links cysteine 13 and cysteine 118. The Involved in PIP2 interaction signature appears at 84 to 100 (AVIRGKKGSGGITIKKT). Phosphothreonine is present on threonine 114.

The protein belongs to the profilin family. As to quaternary structure, occurs in many kinds of cells as a complex with monomeric actin in a 1:1 ratio. Phosphorylated by MAP kinases.

It is found in the cytoplasm. Its subcellular location is the cytoskeleton. Functionally, binds to actin and affects the structure of the cytoskeleton. At high concentrations, profilin prevents the polymerization of actin, whereas it enhances it at low concentrations. The protein is Profilin-4 of Olea europaea (Common olive).